Reading from the N-terminus, the 146-residue chain is Large ribosomal subunit protein uL15 (146 aa).

The segment covering 1–18 has biased composition (basic and acidic residues); that stretch reads MKLHELKPSEGSRKERNR. The segment at 1–57 is disordered; sequence MKLHELKPSEGSRKERNRVGRGIGSGNGKTSGKGHKGQNARSGGGVRPGFEGGQMPL. Composition is skewed to gly residues over residues 21-31 and 42-52; these read RGIGSGNGKTS and SGGGVRPGFEG.

It belongs to the universal ribosomal protein uL15 family. As to quaternary structure, part of the 50S ribosomal subunit.

Binds to the 23S rRNA. The chain is Large ribosomal subunit protein uL15 from Bacillus pumilus (strain SAFR-032).